Here is a 567-residue protein sequence, read N- to C-terminus: PCNA-interacting partner (567 aa).

Residues 485–552 (IDLKTAEQVK…GVSRNKASKN (68 aa)) are disordered. 2 stretches are compositionally biased toward polar residues: residues 512-524 (DIQS…QENE) and 534-552 (LTSS…ASKN).

This sequence belongs to the PARI family.

Its subcellular location is the cytoplasm. The protein resides in the nucleus. Required to suppress inappropriate homologous recombination, thereby playing a central role DNA repair and in the maintenance of genomic stability. This chain is PCNA-interacting partner (parpbp), found in Xenopus laevis (African clawed frog).